The following is a 676-amino-acid chain: Lutropin-choriogonadotropic hormone receptor (676 aa).

Residues 1–29 (MKQPLLALQLLKLLLLLLLPLPPLPRALR) form the signal peptide. Over 30–340 (EARCCPEPCN…EDIMGYDFLR (311 aa)) the chain is Extracellular. The N-linked (GlcNAc...) asparagine glycan is linked to asparagine 103. LRR repeat units lie at residues 126-151 (LPRL…IFSS), 153-175 (TNFI…AFQG), 176-200 (MNNE…AFNG), 201-224 (TTVI…AFRG), and 225-248 (ATGP…GLES). N-linked (GlcNAc...) asparagine glycans are attached at residues asparagine 178 and asparagine 199. The residue at position 308 (tyrosine 308) is a Sulfotyrosine. Residues 341–362 (VLIWLINILAIMGNMTVLFVLL) traverse the membrane as a helical segment. The Cytoplasmic segment spans residues 363–372 (TSRYKLTVPR). The helical transmembrane segment at 373–393 (FLMCNLSFADFCMGLYLLLIA) threads the bilayer. Residues 394-416 (SVDSQTKGQYYNHAIDWQTGSGC) are Extracellular-facing. Cysteine 416 and cysteine 491 are oxidised to a cystine. The chain crosses the membrane as a helical span at residues 417–439 (NTAGFFTVFASELSVYTLTVITL). Residues 440–459 (ERWHTITYAIHLDQKLRLRH) lie on the Cytoplasmic side of the membrane. A helical transmembrane segment spans residues 460-482 (AILIMLGGWLFSSLIAMLPLVGV). Residues 483-502 (SNYMKVSICFPMDVETTLSQ) lie on the Extracellular side of the membrane. A helical membrane pass occupies residues 503 to 526 (IYILTILILNVVAFIIICACYIKI). Over 527-547 (YFAVRNPELMATNKDTKIAKK) the chain is Cytoplasmic. A helical transmembrane segment spans residues 548–571 (MAILIFTDFTCMAPISFFAISAAF). The Extracellular portion of the chain corresponds to 572-582 (KMPLITVTNSK). The chain crosses the membrane as a helical span at residues 583-604 (VLLVLFYPINSCANPFLYAIFT). The Cytoplasmic segment spans residues 605–676 (KTFRRDFFLL…LLDKTCYKEY (72 aa)). 2 S-palmitoyl cysteine lipidation sites follow: cysteine 620 and cysteine 621.

The protein belongs to the G-protein coupled receptor 1 family. FSH/LSH/TSH subfamily. Post-translationally, sulfated.

It is found in the cell membrane. Receptor for lutropin-choriogonadotropic hormone. The activity of this receptor is mediated by G proteins which activate adenylate cyclase. This chain is Lutropin-choriogonadotropic hormone receptor (LHCGR), found in Callithrix jacchus (White-tufted-ear marmoset).